The chain runs to 401 residues: cAMP-dependent protein kinase type II-alpha regulatory subunit (401 aa).

Ser2 bears the N-acetylserine mark. The tract at residues 2 to 135 (SHIQIPPGLT…RLQEACKDIL (134 aa)) is dimerization and phosphorylation. The disordered stretch occupies residues 43–65 (ARSRASTPPAAPPSGSQDFDPGA). Over residues 46 to 58 (RASTPPAAPPSGS) the composition is skewed to low complexity. Ser48, Ser75, and Ser77 each carry phosphoserine. Position 96 is a phosphoserine; by PKA (Ser96). Residues 136 to 257 (LFKN…ESVP), Glu205, Arg214, 258 to 401 (LLKS…DPGQ), Glu335, and Arg344 each bind 3',5'-cyclic AMP. Thr212 carries the post-translational modification Phosphothreonine; by PDPK1. Residues Ser347 and Ser392 each carry the phosphoserine modification.

It belongs to the cAMP-dependent kinase regulatory chain family. In terms of assembly, the inactive form of the enzyme is composed of two regulatory chains and two catalytic chains. Activation by cAMP produces two active catalytic monomers and a regulatory dimer that binds four cAMP molecules. Interacts with AKAP4 and CBFA2T3. Interacts with the phosphorylated form of PJA2. Interacts with MYRIP; this interaction may link PKA to components of the exocytosis machinery, thus facilitating exocytosis, including insulin release. Forms a complex composed of PRKAR2A, GSK3B and GSKIP through GSKIP interaction; facilitates PKA-induced phosphorylation and regulates GSK3B activity. Interacts with ADCY8; inhibits adenylate cyclase activity through PKA phosphorylation. A second phosphorylation site has not been located. In terms of processing, phosphorylation of Thr-212 by PDPK1 seems to attenuate the activity of PKA, perhaps by strengthening interaction between the regulatory and the catalytic subunits. As to expression, four types of regulatory chains are found: I-alpha, I-beta, II-alpha, and II-beta. Their expression varies among tissues and is in some cases constitutive and in others inducible.

The protein resides in the cytoplasm. The protein localises to the cell membrane. Functionally, regulatory subunit of the cAMP-dependent protein kinases involved in cAMP signaling in cells. Type II regulatory chains mediate membrane association by binding to anchoring proteins, including the MAP2 kinase. The chain is cAMP-dependent protein kinase type II-alpha regulatory subunit (PRKAR2A) from Bos taurus (Bovine).